A 407-amino-acid chain; its full sequence is Arginine deiminase (407 aa).

Residue Cys397 is the Amidino-cysteine intermediate of the active site.

The protein belongs to the arginine deiminase family.

It is found in the cytoplasm. It carries out the reaction L-arginine + H2O = L-citrulline + NH4(+). It functions in the pathway amino-acid degradation; L-arginine degradation via ADI pathway; carbamoyl phosphate from L-arginine: step 1/2. The protein is Arginine deiminase of Salmonella choleraesuis (strain SC-B67).